The primary structure comprises 732 residues: 1,4-alpha-glucan branching enzyme GlgB (732 aa).

Aspartate 412 functions as the Nucleophile in the catalytic mechanism. The active-site Proton donor is the glutamate 465.

It belongs to the glycosyl hydrolase 13 family. GlgB subfamily. Monomer.

It catalyses the reaction Transfers a segment of a (1-&gt;4)-alpha-D-glucan chain to a primary hydroxy group in a similar glucan chain.. It participates in glycan biosynthesis; glycogen biosynthesis. Functionally, catalyzes the formation of the alpha-1,6-glucosidic linkages in glycogen by scission of a 1,4-alpha-linked oligosaccharide from growing alpha-1,4-glucan chains and the subsequent attachment of the oligosaccharide to the alpha-1,6 position. The polypeptide is 1,4-alpha-glucan branching enzyme GlgB (Pseudomonas aeruginosa (strain ATCC 15692 / DSM 22644 / CIP 104116 / JCM 14847 / LMG 12228 / 1C / PRS 101 / PAO1)).